The sequence spans 237 residues: 1-(5-phosphoribosyl)-5-[(5-phosphoribosylamino)methylideneamino] imidazole-4-carboxamide isomerase (237 aa).

Asp-8 (proton acceptor) is an active-site residue. Catalysis depends on Asp-130, which acts as the Proton donor.

The protein belongs to the HisA/HisF family.

The protein localises to the cytoplasm. The catalysed reaction is 1-(5-phospho-beta-D-ribosyl)-5-[(5-phospho-beta-D-ribosylamino)methylideneamino]imidazole-4-carboxamide = 5-[(5-phospho-1-deoxy-D-ribulos-1-ylimino)methylamino]-1-(5-phospho-beta-D-ribosyl)imidazole-4-carboxamide. It functions in the pathway amino-acid biosynthesis; L-histidine biosynthesis; L-histidine from 5-phospho-alpha-D-ribose 1-diphosphate: step 4/9. The protein is 1-(5-phosphoribosyl)-5-[(5-phosphoribosylamino)methylideneamino] imidazole-4-carboxamide isomerase of Halothermothrix orenii (strain H 168 / OCM 544 / DSM 9562).